The chain runs to 274 residues: Cell division protein FtsQ (274 aa).

Residues 1 to 24 form a disordered region; it reads MRDLHAKKQRVPHNRVKKPPKERK. Residues 1 to 33 lie on the Cytoplasmic side of the membrane; that stretch reads MRDLHAKKQRVPHNRVKKPPKERKPINWGPILK. Basic residues predominate over residues 7-21; sequence KKQRVPHNRVKKPPK. Residues 34-56 form a helical membrane-spanning segment; the sequence is FASRGFGGAALCAGLGFGGWQLY. The Periplasmic segment spans residues 57 to 274; sequence NLVSRTTLLR…YADKIIVKKV (218 aa). The POTRA domain maps to 65 to 133; it reads LRLEAIEVSP…HTLSITVSER (69 aa).

This sequence belongs to the FtsQ/DivIB family. FtsQ subfamily.

It localises to the cell inner membrane. Its function is as follows. Essential cell division protein. The sequence is that of Cell division protein FtsQ from Geobacter sp. (strain M21).